Reading from the N-terminus, the 185-residue chain is Ribosome-recycling factor (185 aa).

Belongs to the RRF family.

The protein localises to the cytoplasm. Responsible for the release of ribosomes from messenger RNA at the termination of protein biosynthesis. May increase the efficiency of translation by recycling ribosomes from one round of translation to another. The sequence is that of Ribosome-recycling factor from Yersinia enterocolitica serotype O:8 / biotype 1B (strain NCTC 13174 / 8081).